A 942-amino-acid chain; its full sequence is Homeobox protein 2 (942 aa).

Composition is skewed to low complexity over residues 32-87 (ECNE…NINE) and 98-130 (SPYSSPSSSISSPSRSPSPNSPASSSPIHSPIP). Disordered regions lie at residues 32–149 (ECNE…PQNI), 161–494 (LESP…RLKK), 537–580 (RQEK…QGGA), and 609–942 (FKNN…CQQN). The span at 131–149 (NTNFKQSGEYQSIPSPQNI) shows a compositional bias: polar residues. Low complexity predominate over residues 163-261 (SPNSSNSSPS…PSSNLSKSNS (99 aa)). Residues 269 to 290 (QAPSNTSSPQLLSPNHNQQRIS) are compositionally biased toward polar residues. Low complexity-rich tracts occupy residues 299–430 (NNNH…NSSP) and 450–464 (NNNNNNNNNNNSNSS). A compositionally biased stretch (polar residues) spans 465–481 (FDEYQPQQKVSRSNSPN). Residues 485 to 544 (EKKRRTRLKKEQADILKTFFDNDDYPTKDDKETLANRLGMSYCAVTTWFSNKRQEKKRRG) constitute a DNA-binding region (homeobox). Composition is skewed to low complexity over residues 609–621 (FKNNNMDNNNKNV), 628–685 (NNNN…GSSD), 694–737 (NNNN…NNNN), 752–764 (NNNNNNNNNNNNN), 776–864 (SDDT…YLNN), and 890–927 (NNFNGDNNNNNNNKNNNNNNQNNNGNGNNNNNNNNDNN). Residues 835-865 (NNNNNNNNQNNNNNNNNNQYNNNNKNYLNNI) adopt a coiled-coil conformation.

Its subcellular location is the nucleus. Functionally, putative transcription factor that may potentiate the function of warA. The chain is Homeobox protein 2 (hbx2) from Dictyostelium discoideum (Social amoeba).